The chain runs to 303 residues: Porphobilinogen deaminase (303 aa).

Position 240 is an S-(dipyrrolylmethanemethyl)cysteine (cysteine 240).

This sequence belongs to the HMBS family. In terms of assembly, monomer. Requires dipyrromethane as cofactor.

The enzyme catalyses 4 porphobilinogen + H2O = hydroxymethylbilane + 4 NH4(+). The protein operates within porphyrin-containing compound metabolism; protoporphyrin-IX biosynthesis; coproporphyrinogen-III from 5-aminolevulinate: step 2/4. Tetrapolymerization of the monopyrrole PBG into the hydroxymethylbilane pre-uroporphyrinogen in several discrete steps. This Stenotrophomonas maltophilia (strain K279a) protein is Porphobilinogen deaminase.